The chain runs to 230 residues: Orotidine 5'-phosphate decarboxylase (230 aa).

Substrate is bound by residues Asp-8, Lys-30, 59–68 (DLKLYDIPNT), Thr-118, Arg-178, Gln-187, Gly-207, and Arg-208. Lys-61 (proton donor) is an active-site residue.

Belongs to the OMP decarboxylase family. Type 1 subfamily. As to quaternary structure, homodimer.

It carries out the reaction orotidine 5'-phosphate + H(+) = UMP + CO2. It participates in pyrimidine metabolism; UMP biosynthesis via de novo pathway; UMP from orotate: step 2/2. In terms of biological role, catalyzes the decarboxylation of orotidine 5'-monophosphate (OMP) to uridine 5'-monophosphate (UMP). This Sulfurovum sp. (strain NBC37-1) protein is Orotidine 5'-phosphate decarboxylase.